Consider the following 285-residue polypeptide: Probable endonuclease 4 (285 aa).

Residues His68, His108, Glu145, Asp179, His182, His216, Asp229, His231, and Glu261 each contribute to the Zn(2+) site.

It belongs to the AP endonuclease 2 family. Zn(2+) serves as cofactor.

It catalyses the reaction Endonucleolytic cleavage to 5'-phosphooligonucleotide end-products.. Its function is as follows. Endonuclease IV plays a role in DNA repair. It cleaves phosphodiester bonds at apurinic or apyrimidinic (AP) sites, generating a 3'-hydroxyl group and a 5'-terminal sugar phosphate. The protein is Probable endonuclease 4 of Geotalea daltonii (strain DSM 22248 / JCM 15807 / FRC-32) (Geobacter daltonii).